Reading from the N-terminus, the 238-residue chain is MSCINLPNVLPGSPSKTRGQIQVILGPMFSGKSTELMRRVRRFQVAQYKCLVIKYAKDTRYSSLFSTHDRNTMEALPACLLRDVIQDAQRVAVIGIDEGQFFPDIVEFCENMANSGKTVIVAALDGTFQRKAFGTILNLVPLAESVVKLTAVCMECFREAAYTKRLGVEKEVEVIGGADKYHSVCRLCYFKKASGQPAVLDSEENKENCPMTLGKPAEAPGVRKLFATHQIWQCSQAN.

Position 2 is an N-acetylserine (S2). A phosphoserine mark is found at S2 and S13. ATP contacts are provided by residues 26–33 (GPMFSGKS), 58–60 (DTR), and 97–100 (DEGQ). E98 acts as the Proton acceptor in catalysis. A substrate-binding site is contributed by F128. Zn(2+)-binding residues include C153 and C156. Substrate is bound by residues 172–176 (VEVIG) and Y181. The Zn(2+) site is built by C185 and C188. Residues 206–208 (KEN) carry the KEN box motif. Phosphoserine is present on S235.

This sequence belongs to the thymidine kinase family. Homotetramer. Tetramerization from dimerization is induced by ATP and increases catalytic efficiency due to a high affinity for thymidine. Tetramerization is inhibited by phosphorylation at Ser-13. Interacts (via the KEN box) with FZR1. Phosphorylated on Ser-13 in mitosis. Phosphorylation of Ser-13 by CDK1 during mitosis reduces homotetramerization and catalytic efficiency when DNA replication is complete and intracellular TK1 is still present at a high level. Post-translationally, polyubiquitinated. Postmitosis, ubiquitination leads to proteasomal degradation. The KEN box sequence located at the C-terminal region targets for degradation by the anaphase promoting complex (APC/C) activated and rate-limited by FZR1.

It is found in the cytoplasm. It carries out the reaction thymidine + ATP = dTMP + ADP + H(+). Functionally, cell-cycle-regulated enzyme of importance in nucleotide metabolism. Catalyzes the first enzymatic step in the salvage pathway converting thymidine into thymidine monophosphate. Transcriptional regulation limits expression to the S phase of the cell cycle and transient expression coincides with the oscillation in the intracellular dTTP concentration. The polypeptide is Thymidine kinase, cytosolic (TK1) (Bos taurus (Bovine)).